The following is a 508-amino-acid chain: MGLPWYRVHTVVLNDPGRLLSVHIMHTALVAGWAGSMALYELAVFDPSDPVLDPMWRQGMFVIPFMTRLGITNSWGGWNITGGTITNPGLWSYEGVAGAHIVFSGLCFLAAIWHWVYWDLEIFCDERTGKPSLDLPKIFGIHLFLSGVACFGFGAFHVTGLYGPGIWVSDPYGLTGKVQPVNPAWGVEGFDPFVPGGIASHHIAAGTLGILAGLFHLSVRPPQRLYKGLRMGNIETVLSSSIAAVFFAAFVVAGTMWYGSATTPIELFGPTRYQWDQGYFQQEIYRRVSAGLAENQSLSEAWSKIPEKLAFYDYIGNNPAKGGLFRAGSMDNGDGIAVGWLGHPVFRNKEGRELFVRRMPTFFETFPVVLVDGDGIVRADVPFRRAESKYSVEQVGVTVEFYGGELNGVSYSDPATVKKYARRAQLGEVFELDRATLKSDGVFRSSPRGWFTFGHASFALLFFFGHIWHGARTLFRDVFAGIDPDLDAQVEFGAFQKLGDPTTKRQAV.

6 consecutive transmembrane segments (helical) span residues 21-36 (SVHIMHTALVAGWAGS), 101-115 (IVFSGLCFLAAIWHW), 140-156 (GIHLFLSGVACFGFGAF), 203-218 (IAAGTLGILAGLFHLS), 237-252 (VLSSSIAAVFFAAFVV), and 457-472 (SFALLFFFGHIWHGAR).

Belongs to the PsbB/PsbC family. PsbB subfamily. PSII is composed of 1 copy each of membrane proteins PsbA, PsbB, PsbC, PsbD, PsbE, PsbF, PsbH, PsbI, PsbJ, PsbK, PsbL, PsbM, PsbT, PsbX, PsbY, PsbZ, Psb30/Ycf12, at least 3 peripheral proteins of the oxygen-evolving complex and a large number of cofactors. It forms dimeric complexes. Binds multiple chlorophylls. PSII binds additional chlorophylls, carotenoids and specific lipids. serves as cofactor.

The protein localises to the plastid. It localises to the chloroplast thylakoid membrane. One of the components of the core complex of photosystem II (PSII). It binds chlorophyll and helps catalyze the primary light-induced photochemical processes of PSII. PSII is a light-driven water:plastoquinone oxidoreductase, using light energy to abstract electrons from H(2)O, generating O(2) and a proton gradient subsequently used for ATP formation. In Nasturtium officinale (Watercress), this protein is Photosystem II CP47 reaction center protein.